Reading from the N-terminus, the 367-residue chain is bZIP transcription factor 18 (367 aa).

The segment at 1-57 (MEDPSNPQPNQSNLSQCPPLATAPTPAPVRGPYHRRAHSEVQFRLPEDLDLSEPFGG) is disordered. The segment covering 38-47 (HSEVQFRLPE) has biased composition (basic and acidic residues). Phosphoserine is present on S70. The interval 79 to 124 (SGSGSASDSAGPSAPRSDNPFSAENGGAEAGNSRPRHRHSLSVDGS) is disordered. The span at 82–96 (GSASDSAGPSAPRSD) shows a compositional bias: low complexity. Residues 148–211 (DPKRAKRIIA…TGLSSENTEL (64 aa)) enclose the bZIP domain. Residues 150–171 (KRAKRIIANRQSAARSKERKAR) form a basic motif region. Positions 166 to 245 (KERKARYILE…VERLKFATGE (80 aa)) form a coiled coil. The interval 176–190 (LERKVQTLQTEATTL) is leucine-zipper. Composition is skewed to polar residues over residues 294-309 (QPNN…NPPT), 317-328 (ATSNAPAQSHSY), and 354-367 (FGRS…SSTM). Disordered regions lie at residues 294–330 (QPNN…SYSE) and 343–367 (LDIS…SSTM).

In terms of assembly, interacts with NEAP1. Forms homodimer and heterodimer with bZIP34 and bZIP61. Ubiquitous. Strongly expressed in mature pollen.

It is found in the nucleus. It localises to the nucleoplasm. The protein resides in the cytoplasm. Its subcellular location is the perinuclear region. Functionally, transcription factor that may participate with bZIP34 in the gametophytic control of pollen development. This Arabidopsis thaliana (Mouse-ear cress) protein is bZIP transcription factor 18.